The sequence spans 514 residues: MEDSEFLAYVELLDEVEQGSVRAKASSVSLHAERTWMEKMKVEDLNVCEPASPAPEAPATSLLNDLKYSPSEEEEVTYTVINQFQQKFGAAILHIKKQNVLSVAAEGANVCRHGKLCWLQVATNCRVYLFDIFLLGSRAFHNGLQMILEDKRILKVIHDCRWLSDCLSHQYGILLNNVFDTQVADVLQFSMETGGYLPNCITTLQESLIKHLQVAPKYLSFLEKRQKLIQENPEVWFIRPVSPSLLKILALEATYLLPLRLALLDEMMSDLTTLVDGYLNTYREGSADRLGGTEPTCMELPEELLQLKDFQKQRREKAAREYRVNAQGLLIRTVLQPKKLVTETAGKEEKVKGFLFGKNFRIDKAPSFTSQDFHGDVNLLKEESLNKQATNPQHLPPTEEGETSEDSSNKLICTKSKGSEDQRITQKEHFMTPKHEFQASLSLKEETEQLLMVENKEDLKCTKQAVSMSSFPQETRVSPSDTFYPIRKTVVSTLPPCPALEKIDSWISPFLNLP.

Residues 30–122 (LHAERTWMEK…HGKLCWLQVA (93 aa)) form the 3'-5' exonuclease domain. The tract at residues 384 to 422 (SLNKQATNPQHLPPTEEGETSEDSSNKLICTKSKGSEDQ) is disordered.

Belongs to the EXD1 family. Homodimer. Component of the PET complex, at least composed of EXD1, PIWIL2, TDRD12 and piRNAs.

The protein localises to the cytoplasm. In terms of biological role, RNA-binding component of the PET complex, a multiprotein complex required for the processing of piRNAs during spermatogenesis. The piRNA metabolic process mediates the repression of transposable elements during meiosis by forming complexes composed of piRNAs and Piwi proteins and governs the methylation and subsequent repression of transposable elements, preventing their mobilization, which is essential for the germline integrity. The PET complex is required during the secondary piRNAs metabolic process for the PIWIL2 slicing-triggered loading of PIWIL4 piRNAs. In the PET complex, EXD1 probably acts as an RNA adapter. EXD1 is an inactive exonuclease. This is piRNA biogenesis protein EXD1 (EXD1) from Homo sapiens (Human).